The chain runs to 528 residues: Ribonuclease Y (528 aa).

A helical membrane pass occupies residues 15 to 35 (SLFFLALICGSIIGYFLYSFF). Positions 217–277 (NISVVNIPNE…IRREIAKKTL (61 aa)) constitute a KH domain. One can recognise an HD domain in the interval 343–436 (VLKHSLEVAF…VAIADTLSSA (94 aa)).

This sequence belongs to the RNase Y family.

The protein localises to the cell membrane. Functionally, endoribonuclease that initiates mRNA decay. The polypeptide is Ribonuclease Y (Aster yellows witches'-broom phytoplasma (strain AYWB)).